A 67-amino-acid polypeptide reads, in one-letter code: MRMFRITACLPSPSKIRTQRELQNTFFTKLVPYDAWFREQQRIQKLGGKIIKVELATGRPNTNTGLL.

A CpcD-like domain is found at 1-56; it reads MRMFRITACLPSPSKIRTQRELQNTFFTKLVPYDAWFREQQRIQKLGGKIIKVELA.

This sequence belongs to the phycobilisome linker protein family.

It localises to the cellular thylakoid membrane. Functionally, rod linker protein, associated with allophycocyanin. Linker polypeptides determine the state of aggregation and the location of the disk-shaped phycobiliprotein units within the phycobilisome and modulate their spectroscopic properties in order to mediate a directed and optimal energy transfer. In Synechococcus sp. (strain ATCC 27144 / PCC 6301 / SAUG 1402/1) (Anacystis nidulans), this protein is Phycobilisome 7.8 kDa linker polypeptide, allophycocyanin-associated, core (apcC).